The sequence spans 359 residues: Replication-associated protein (359 aa).

The region spanning 8–116 (QINAKHYFLT…DGDVLEWGTF (109 aa)) is the CRESS-DNA virus Rep endonuclease domain. The RCR-1 signature appears at 15 to 18 (FLTF). Residues glutamate 49, histidine 57, and histidine 59 each coordinate a divalent metal cation. The RCR-2 signature appears at 57–59 (HLH). Residue tyrosine 103 is the For DNA cleavage activity of the active site. Positions 103–106 (YIDK) match the RCR-3 motif. Aspartate 107 is an a divalent metal cation binding site. The binding to RBR1 stretch occupies residues 143–153 (KSEALDVIKEL). The segment at 156–176 (RDYILHFHNINSNLNMVFQVP) is oligomerization. 221–228 (GDSRTGKT) is an ATP binding site.

It belongs to the geminiviridae Rep protein family. As to quaternary structure, homooligomer. Interacts with the replication enhancer protein (REn). Interacts with host retinoblastoma-related protein 1 (RBR1), and may thereby induce the transcription of host replicative enzymes even if the cell is not dividing anymore. Interacts with host PCNA. Interacts with host SCE1 protein. It depends on Mg(2+) as a cofactor. Mn(2+) serves as cofactor.

The protein resides in the host nucleus. Functionally, essential for the replication of viral ssDNA. The closed circular ssDNA genome is first converted to a superhelical dsDNA. Rep binds a specific region at the genome origin of replication. It introduces an endonucleolytic nick within the conserved sequence 5'-TAATATTAC-3' in the intergenic region of the genome present in all geminiviruses, thereby initiating the rolling circle replication (RCR). Following cleavage, binds covalently to the 5'-phosphate of DNA as a tyrosyl ester. The cleavage gives rise to a free 3'-OH that serves as a primer for the cellular DNA polymerase. The polymerase synthesizes the (+) strand DNA by rolling circle mechanism. After one round of replication, a Rep-catalyzed nucleotidyl transfer reaction releases a circular single-stranded virus genome, thereby terminating the replication. Displays origin-specific DNA cleavage, nucleotidyl transferase, ATPase and helicase activities. In Solanum lycopersicum (Tomato), this protein is Replication-associated protein.